A 204-amino-acid polypeptide reads, in one-letter code: Large ribosomal subunit protein uL4 (204 aa).

A disordered region spans residues 44 to 76; sequence KRQGTQSAKTRSEVRGGGIKPWRQKGTGRARQG.

It belongs to the universal ribosomal protein uL4 family. Part of the 50S ribosomal subunit.

Its function is as follows. One of the primary rRNA binding proteins, this protein initially binds near the 5'-end of the 23S rRNA. It is important during the early stages of 50S assembly. It makes multiple contacts with different domains of the 23S rRNA in the assembled 50S subunit and ribosome. Functionally, forms part of the polypeptide exit tunnel. The protein is Large ribosomal subunit protein uL4 of Clostridium perfringens (strain 13 / Type A).